The chain runs to 256 residues: uncharacterized protein (256 aa).

Positions 201–214 (ACKEGVDSSCKEEG) are enriched in basic and acidic residues. Residues 201–231 (ACKEGVDSSCKEEGGGCEEEGSGSEEDSDDS) form a disordered region. A compositionally biased stretch (acidic residues) spans 215–231 (GGCEEEGSGSEEDSDDS).

Its subcellular location is the mitochondrion. This is an uncharacterized protein from Zea mays (Maize).